The chain runs to 511 residues: Glucans biosynthesis protein G (511 aa).

Residues 1 to 22 (MMKMRWLGAAIMLTLYASSSWA) form the signal peptide.

It belongs to the OpgD/OpgG family.

The protein localises to the periplasm. Its pathway is glycan metabolism; osmoregulated periplasmic glucan (OPG) biosynthesis. Involved in the biosynthesis of osmoregulated periplasmic glucans (OPGs). This is Glucans biosynthesis protein G from Salmonella paratyphi A (strain ATCC 9150 / SARB42).